A 4490-amino-acid polypeptide reads, in one-letter code: Dynein axonemal heavy chain 8 (4490 aa).

Ser-674 carries the phosphoserine modification. AAA stretches follow at residues 1808 to 2030 (YQNE…VLRT), 2090 to 2309 (NAVA…KLNL), 2416 to 2669 (YYPT…IWQG), and 2780 to 3034 (QFNE…YRRR). ATP-binding positions include 1846–1853 (GPAGTGKT) and 2128–2135 (GPSGSGKT). The interval 3049–3346 (YKNIYAEKVK…MDLLNDADTC (298 aa)) is stalk. 3 coiled-coil regions span residues 3072 to 3164 (DKLM…ALNT), 3290 to 3354 (LKAN…QAAS), and 3594 to 3630 (RRVI…DNLL). 2 AAA regions span residues 3432 to 3662 (LVDP…EVSE) and 3877 to 4091 (ARKY…FIQN).

It belongs to the dynein heavy chain family. As to quaternary structure, consists of at least two heavy chains and a number of intermediate and light chains. Expressed in spermatozoa (at protein level). Not detected in airway epithelial cells (at protein level).

It is found in the cytoplasm. The protein localises to the cytoskeleton. Its subcellular location is the flagellum axoneme. Its function is as follows. Force generating protein component of the outer dynein arms (ODAs) in the sperm flagellum. Produces force towards the minus ends of microtubules. Dynein has ATPase activity; the force-producing power stroke is thought to occur on release of ADP. Involved in sperm motility; implicated in sperm flagellar assembly. This is Dynein axonemal heavy chain 8 from Homo sapiens (Human).